Consider the following 98-residue polypeptide: Small ribosomal subunit protein bS21B (98 aa).

The interval 61 to 98 is disordered; that stretch reads KLQREGLLPMKPKPVFGAGAGGERGGRGGPGAGPRGPR. Positions 78–98 are enriched in gly residues; sequence AGAGGERGGRGGPGAGPRGPR.

The protein belongs to the bacterial ribosomal protein bS21 family.

The chain is Small ribosomal subunit protein bS21B from Bradyrhizobium diazoefficiens (strain JCM 10833 / BCRC 13528 / IAM 13628 / NBRC 14792 / USDA 110).